We begin with the raw amino-acid sequence, 135 residues long: Large ribosomal subunit protein mL54 (135 aa).

The transit peptide at 1–14 (MAAAHLLRASRVWA) directs the protein to the mitochondrion.

This sequence belongs to the mitochondrion-specific ribosomal protein mL54 family. In terms of assembly, component of the mitochondrial ribosome large subunit (39S) which comprises a 16S rRNA and about 50 distinct proteins.

It localises to the mitochondrion. The protein is Large ribosomal subunit protein mL54 (Mrpl54) of Mus musculus (Mouse).